Consider the following 171-residue polypeptide: Large ribosomal subunit protein bL9 (171 aa).

This sequence belongs to the bacterial ribosomal protein bL9 family.

Binds to the 23S rRNA. The protein is Large ribosomal subunit protein bL9 of Rickettsia canadensis (strain McKiel).